Reading from the N-terminus, the 265-residue chain is Synaptoporin (265 aa).

Topologically, residues 1–4 (MCMV) are cytoplasmic. An MARVEL domain is found at 1-202 (MCMVIFAPLF…NIWFVFKETG (202 aa)). The helical transmembrane segment at 5–25 (IFAPLFAIFAFATCGGYSGGL) threads the bilayer. Residues 26–81 (RLSVDCVNKTESNLSIDIAFAYPFRLHQVTFEVPTCEGKERQKLALVGDSSSSAEF) are Vesicular-facing. Residues Asn-33 and Asn-38 are each glycosylated (N-linked (GlcNAc...) asparagine). A helical transmembrane segment spans residues 82–102 (FVTVAVFAFLYSLAATVVYIF). Over 103–114 (FQNKYRENNRGP) the chain is Cytoplasmic. A helical transmembrane segment spans residues 115 to 135 (LIDFIVTVVFSFLWLVGSSAW). The Vesicular portion of the chain corresponds to 136–177 (AKGLSDVKVATDPKEVLLLMSACKQPSNKCMAVHSPVMSSLN). The N-linked (GlcNAc...) asparagine glycan is linked to Asn-177. A helical membrane pass occupies residues 178–198 (TSVVFGFLNFILWAGNIWFVF). Residues 199-265 (KETGWHSSGQ…SGPTSFNNQI (67 aa)) lie on the Cytoplasmic side of the membrane. Repeat unit 1 spans residues 210–214 (YLSDP). The 5 X approximate repeats stretch occupies residues 210–242 (YLSDPMEKHSSSYNQGGYNQDSYGSSGGYSQQA). A phosphoserine mark is found at Ser-212 and Ser-220. The disordered stretch occupies residues 221–265 (SYNQGGYNQDSYGSSGGYSQQASLGPTSDEFGQQPSGPTSFNNQI). 4 repeat units span residues 222-226 (YNQGG), 227-231 (YNQDS), 232-236 (YGSSG), and 238-242 (YSQQA). A compositionally biased stretch (low complexity) spans 224–243 (QGGYNQDSYGSSGGYSQQAS). Residues 244–265 (LGPTSDEFGQQPSGPTSFNNQI) show a composition bias toward polar residues.

Belongs to the synaptophysin/synaptobrevin family. As to expression, central nervous system.

The protein localises to the cytoplasmic vesicle. It is found in the secretory vesicle. The protein resides in the synaptic vesicle membrane. Its subcellular location is the synapse. It localises to the synaptosome. Intrinsic membrane protein of small synaptic vesicles. Probable vesicular channel protein. This Rattus norvegicus (Rat) protein is Synaptoporin (Synpr).